The sequence spans 256 residues: Type III pantothenate kinase (256 aa).

Residue 6 to 13 (DVGNSNIV) participates in ATP binding. Substrate is bound by residues tyrosine 100 and 107–110 (GADR). The active-site Proton acceptor is the aspartate 109. Aspartate 129 is a K(+) binding site. An ATP-binding site is contributed by threonine 132. Residue threonine 184 coordinates substrate.

This sequence belongs to the type III pantothenate kinase family. In terms of assembly, homodimer. NH4(+) serves as cofactor. The cofactor is K(+).

The protein resides in the cytoplasm. It catalyses the reaction (R)-pantothenate + ATP = (R)-4'-phosphopantothenate + ADP + H(+). Its pathway is cofactor biosynthesis; coenzyme A biosynthesis; CoA from (R)-pantothenate: step 1/5. In terms of biological role, catalyzes the phosphorylation of pantothenate (Pan), the first step in CoA biosynthesis. The protein is Type III pantothenate kinase of Geotalea uraniireducens (strain Rf4) (Geobacter uraniireducens).